A 563-amino-acid chain; its full sequence is Developmental regulatory protein wetA (563 aa).

2 stretches are compositionally biased toward polar residues: residues 54-69 (EQSPIISTSKQQTHPS) and 160-175 (HKQSFSPSLTRPSQFQ). Disordered regions lie at residues 54–81 (EQSPIISTSKQQTHPSPQWAKDFWSLPP), 112–176 (ASST…QFQK), 272–318 (SNNS…PDLQ), 334–356 (PQRQPSYQQVVASPPPQQPIQNT), 430–494 (PQLH…SPKG), and 516–538 (GVAPSGSSKTKARREQEARDRRR). Positions 272-305 (SNNSTVTSSPPSADDIFPSPHSSDPQSMSSWHSD) are enriched in low complexity. Over residues 430-441 (PQLHPQSRSPSL) the composition is skewed to polar residues.

It belongs to the wetA family.

Functionally, brlA, abaA and wetA are pivotal regulators of conidiophore development and conidium maturation. They act individually and together to regulate their own expression and that of numerous other sporulation-specific genes. In Aspergillus oryzae (strain ATCC 42149 / RIB 40) (Yellow koji mold), this protein is Developmental regulatory protein wetA.